Consider the following 283-residue polypeptide: Bifunctional protein FolD (283 aa).

NADP(+)-binding positions include 165-167, Ser-190, and Val-231; that span reads GRS.

Belongs to the tetrahydrofolate dehydrogenase/cyclohydrolase family. As to quaternary structure, homodimer.

It carries out the reaction (6R)-5,10-methylene-5,6,7,8-tetrahydrofolate + NADP(+) = (6R)-5,10-methenyltetrahydrofolate + NADPH. It catalyses the reaction (6R)-5,10-methenyltetrahydrofolate + H2O = (6R)-10-formyltetrahydrofolate + H(+). It participates in one-carbon metabolism; tetrahydrofolate interconversion. Catalyzes the oxidation of 5,10-methylenetetrahydrofolate to 5,10-methenyltetrahydrofolate and then the hydrolysis of 5,10-methenyltetrahydrofolate to 10-formyltetrahydrofolate. The protein is Bifunctional protein FolD of Bacillus pumilus (strain SAFR-032).